Reading from the N-terminus, the 189-residue chain is S-protein homolog 26 (189 aa).

Residues 1–25 form the signal peptide; it reads MISMNRLSILLFVFAFGLTMMSNTA.

Belongs to the plant self-incompatibility (S1) protein family.

Its subcellular location is the secreted. This Arabidopsis thaliana (Mouse-ear cress) protein is S-protein homolog 26.